The sequence spans 87 residues: Small ribosomal subunit protein bS20 (87 aa).

Residues 1–26 are disordered; the sequence is MANIKSAKKRAIQSEKARKHNASRRS.

It belongs to the bacterial ribosomal protein bS20 family.

Functionally, binds directly to 16S ribosomal RNA. This is Small ribosomal subunit protein bS20 from Escherichia coli O17:K52:H18 (strain UMN026 / ExPEC).